A 1378-amino-acid chain; its full sequence is MAQTLSFNGRRRVRKFFGKIPEVAEMPNLIEVQKASYDQFLMVDEPKGGRPDEGLNAVFKSVFPITDFSGASMLEFVSYEFEAPKFDVEECRQRDLTYAAPLKVTLRLIVFDIDEDTGAKSIKDIKEQSVYMGDMPLMTNNGTFIVNGTERVIVSQMHRSPGVFFDHDKGKSHSSGKLLFAARVIPYRGSWLDIEFDAKDIVYARIDRRRKLPVTSLLMALGMDGEEILSTFYTKATYERSGDGWRIPFQPEALKNAKVITDMIDADTGEVVVEGGKKLTPRLIRQLVDKGLKALKATDEDLYGNYLAEDIVNYSTGEIYLEAGDEIDEKTLGLILQSGFDEIPVLNIDHVNVGAYIRNTLSADKNQNRQEALFDIYRVMRPGEPPTMDSAEAMFNSLFFDAERYDLSAVGRVKMNMRLDLDAEDTVRTLRKEDILAVVKMLVELRDGKGEIDDIDNLGNRRVRSVGELMENQYRLGLLRMERAIKERMSSIEIDTVMPQDLINAKPAAAAVREFFGSSQLSQFMDQVNPLSEITHKRRLSALGPGGLTRERAGFEVRDVHPTHYGRICPIETPEGPNIGLINSLATFARVNKYGFIESPYRKIIDGKVTTDVIYLSAMEEAKYYVAQANAELDGEGAFTEEFVVCRHSGEVMLAPRDNINLMDVSPKQLVSVAAALIPFLENDDANRALMGSNMQRQAVPLLRAEAPFVGTGMEPIVARDSGAAIAARRGGVVDQVDATRIVIRATEDLDAGKSGVDIYRLQKFQRSNQNTCVNQRPLVSVGDAISKGDIIADGPSTDLGDLALGRNALVAFMPWNGYNYEDSILMSERIVSDDVFTSIHIEEFEVMARDTKLGPEEITRDIPNVSEEALKNLDEAGIVYIGAEVQPGDILVGKITPKGESPMTPEEKLLRAIFGEKASDVRDTSMRMPPGTFGTIVEVRVFNRHGVEKDERAMAIEREEIERLAKDRDDEQAILDRNVYGRLIDMLRGHVSIAGPKGFKKGVELSNAVVSEYPRSQWWMFAVEDEKAQSELEALRGQYDESKSRLEQRFMDKVEKVQRGDEMPPGVMKMVKVFVAVKRKIQPGDKMAGRHGNKGVVSRIVPVEDMPFLEDGTHVDICLNPLGVPSRMNVGQILETHLAWACAGMGKKIGEMLEEYRKTMDISELRSELTEIYASEANDEVQRFDDDSLVKLAEEAKRGVSIATPVFDGAHEPDVAAMLKKAGLHESGQSVLYDGRTGEPFDRKVTVGYMYMIKLNHLVDDKIHARSIGPYSLVTQQPLGGKAQFGGQRFGEMEVWALEAYGAAYTLQEMLTVKSDDVAGRTKVYEAIVRGDDTFEAGIPESFNVLVKEMRSLGLSVELENSKIENQSEDQLPDAAE.

Belongs to the RNA polymerase beta chain family. In terms of assembly, the RNAP catalytic core consists of 2 alpha, 1 beta, 1 beta' and 1 omega subunit. When a sigma factor is associated with the core the holoenzyme is formed, which can initiate transcription.

It catalyses the reaction RNA(n) + a ribonucleoside 5'-triphosphate = RNA(n+1) + diphosphate. In terms of biological role, DNA-dependent RNA polymerase catalyzes the transcription of DNA into RNA using the four ribonucleoside triphosphates as substrates. In Agrobacterium fabrum (strain C58 / ATCC 33970) (Agrobacterium tumefaciens (strain C58)), this protein is DNA-directed RNA polymerase subunit beta.